The primary structure comprises 293 residues: Mycothiol S-conjugate amidase (293 aa).

Positions 13, 16, and 144 each coordinate Zn(2+).

Belongs to the MshB deacetylase family. Mca subfamily. In terms of assembly, monomer. Zn(2+) serves as cofactor.

The enzyme catalyses mycothiol S-conjugate + H2O = an N-acetyl-L-cysteine-S-conjugate + 1D-myo-inositol 2-amino-2-deoxy-alpha-D-glucopyranoside. In terms of biological role, a mycothiol (MSH, N-acetylcysteinyl-glucosaminyl-inositol) S-conjugate amidase, it recycles conjugated MSH to the N-acetyl cysteine conjugate (AcCys S-conjugate, a mercapturic acid) and the MSH precursor. Involved in MSH-dependent detoxification of a number of alkylating agents and antibiotics. This Streptomyces coelicolor (strain ATCC BAA-471 / A3(2) / M145) protein is Mycothiol S-conjugate amidase.